The following is a 620-amino-acid chain: 1-deoxy-D-xylulose-5-phosphate synthase (620 aa).

Thiamine diphosphate is bound by residues H80 and 121–123; that span reads GHS. Residue D152 coordinates Mg(2+). Thiamine diphosphate is bound by residues 153–154, N181, Y288, and E370; that span reads GA. A Mg(2+)-binding site is contributed by N181.

The protein belongs to the transketolase family. DXPS subfamily. In terms of assembly, homodimer. Requires Mg(2+) as cofactor. Thiamine diphosphate serves as cofactor.

It carries out the reaction D-glyceraldehyde 3-phosphate + pyruvate + H(+) = 1-deoxy-D-xylulose 5-phosphate + CO2. Its pathway is metabolic intermediate biosynthesis; 1-deoxy-D-xylulose 5-phosphate biosynthesis; 1-deoxy-D-xylulose 5-phosphate from D-glyceraldehyde 3-phosphate and pyruvate: step 1/1. In terms of biological role, catalyzes the acyloin condensation reaction between C atoms 2 and 3 of pyruvate and glyceraldehyde 3-phosphate to yield 1-deoxy-D-xylulose-5-phosphate (DXP). The polypeptide is 1-deoxy-D-xylulose-5-phosphate synthase (Escherichia fergusonii (strain ATCC 35469 / DSM 13698 / CCUG 18766 / IAM 14443 / JCM 21226 / LMG 7866 / NBRC 102419 / NCTC 12128 / CDC 0568-73)).